Consider the following 337-residue polypeptide: tRNA N6-adenosine threonylcarbamoyltransferase (337 aa).

Histidine 111 and histidine 115 together coordinate Fe cation. Substrate-binding positions include leucine 134 to glycine 138, aspartate 167, glycine 180, and asparagine 272. Position 300 (aspartate 300) interacts with Fe cation.

This sequence belongs to the KAE1 / TsaD family. It depends on Fe(2+) as a cofactor.

The protein resides in the cytoplasm. It catalyses the reaction L-threonylcarbamoyladenylate + adenosine(37) in tRNA = N(6)-L-threonylcarbamoyladenosine(37) in tRNA + AMP + H(+). Its function is as follows. Required for the formation of a threonylcarbamoyl group on adenosine at position 37 (t(6)A37) in tRNAs that read codons beginning with adenine. Is involved in the transfer of the threonylcarbamoyl moiety of threonylcarbamoyl-AMP (TC-AMP) to the N6 group of A37, together with TsaE and TsaB. TsaD likely plays a direct catalytic role in this reaction. The sequence is that of tRNA N6-adenosine threonylcarbamoyltransferase from Pectobacterium atrosepticum (strain SCRI 1043 / ATCC BAA-672) (Erwinia carotovora subsp. atroseptica).